A 217-amino-acid polypeptide reads, in one-letter code: Adapter protein MecA (217 aa).

It belongs to the MecA family. In terms of assembly, homodimer.

Its function is as follows. Enables the recognition and targeting of unfolded and aggregated proteins to the ClpC protease or to other proteins involved in proteolysis. The polypeptide is Adapter protein MecA (Listeria welshimeri serovar 6b (strain ATCC 35897 / DSM 20650 / CCUG 15529 / CIP 8149 / NCTC 11857 / SLCC 5334 / V8)).